The sequence spans 203 residues: Proteasome subunit beta 2 (203 aa).

Residues 1–9 (MGEEFQVGA) constitute a propeptide, removed in mature form; by autocatalysis. The active-site Nucleophile is the Thr-10.

This sequence belongs to the peptidase T1B family. In terms of assembly, the 20S proteasome core is composed of 14 alpha and 14 beta subunits that assemble into four stacked heptameric rings, resulting in a barrel-shaped structure. The two inner rings, each composed of seven catalytic beta subunits, are sandwiched by two outer rings, each composed of seven alpha subunits. The catalytic chamber with the active sites is on the inside of the barrel. Has a gated structure, the ends of the cylinder being occluded by the N-termini of the alpha-subunits. Is capped at one or both ends by the proteasome regulatory ATPase, PAN.

Its subcellular location is the cytoplasm. The catalysed reaction is Cleavage of peptide bonds with very broad specificity.. With respect to regulation, the formation of the proteasomal ATPase PAN-20S proteasome complex, via the docking of the C-termini of PAN into the intersubunit pockets in the alpha-rings, triggers opening of the gate for substrate entry. Interconversion between the open-gate and close-gate conformations leads to a dynamic regulation of the 20S proteasome proteolysis activity. Its function is as follows. Component of the proteasome core, a large protease complex with broad specificity involved in protein degradation. In Pyrobaculum neutrophilum (strain DSM 2338 / JCM 9278 / NBRC 100436 / V24Sta) (Thermoproteus neutrophilus), this protein is Proteasome subunit beta 2.